The following is a 379-amino-acid chain: Tryptophan--tRNA ligase, mitochondrial (379 aa).

ATP contacts are provided by residues Q42 and 48–51; that span reads HLGN. Positions 43–51 match the 'HIGH' region motif; that stretch reads PTGCFHLGN. D184 is an L-tryptophan binding site. Residues 196–198, V235, 244–248, and K247 contribute to the ATP site; these read GDD and KMSKS. Residues 244–248 carry the 'KMSKS' region motif; sequence KMSKS.

It belongs to the class-I aminoacyl-tRNA synthetase family. Homodimer.

It is found in the mitochondrion matrix. The catalysed reaction is tRNA(Trp) + L-tryptophan + ATP = L-tryptophyl-tRNA(Trp) + AMP + diphosphate + H(+). Functionally, mitochondrial aminoacyl-tRNA synthetase that catalyzes the attachment of tryptophan to tRNA(Trp). The polypeptide is Tryptophan--tRNA ligase, mitochondrial (MSW1) (Saccharomyces cerevisiae (strain ATCC 204508 / S288c) (Baker's yeast)).